The sequence spans 192 residues: MSRTKKTRRITDIMPARKADKKPEQPKLSGGKNRKSTRYELDAKAREEKKKRKHKGLPTGSRNVDPAEQKKAAVKEVKDPRIGSRKKIPLMVEFVNKPEKGQIIKPVAMEEYKPHLSPELELEQLENNEILNQLLDEIEAGKTLSAKDQKFVDECLDRIDELMTELGIQDEDEDNGDALLRQFETMDINQFR.

Positions 1–80 (MSRTKKTRRI…KAAVKEVKDP (80 aa)) are disordered. Basic and acidic residues-rich tracts occupy residues 9-25 (RITDIMPARKADKKPEQ), 37-48 (TRYELDAKAREE), and 65-80 (DPAEQKKAAVKEVKDP).

Belongs to the YihI family. Interacts with Der.

A GTPase-activating protein (GAP) that modifies Der/EngA GTPase function. May play a role in ribosome biogenesis. In Actinobacillus pleuropneumoniae serotype 5b (strain L20), this protein is Der GTPase-activating protein YihI.